The primary structure comprises 219 residues: MGRLDVKNSWIEFHQDEMTSFLKLAIIGTVLLGVAHGANLTAAEKETYCELRSAIQTFLCIERLRDFAAKVDELDMDKKSELKEFKKTCDSLKNCFAITRCGPNSTMDEAELFRMVEKNCEAVVYIHEDFSDCSDKLTAKKSVCFDNWDPIPDGIHLEEDEKKVEKMKKETCKRYFGKDDCMKKEIVETCSQKEWDKFREQFINLSSDLVSKCDFSRLG.

Over 1 to 20 (MGRLDVKNSWIEFHQDEMTS) the chain is Cytoplasmic. A helical; Signal-anchor for type II membrane protein transmembrane segment spans residues 21–43 (FLKLAIIGTVLLGVAHGANLTAA). Residues 44–219 (EKETYCELRS…VSKCDFSRLG (176 aa)) lie on the Extracellular side of the membrane. N-linked (GlcNAc...) asparagine glycans are attached at residues Asn-104 and Asn-204.

It belongs to the UPF0376 family.

Its subcellular location is the membrane. The sequence is that of UPF0376 protein C36C5.12 from Caenorhabditis elegans.